The sequence spans 281 residues: ATP synthase gamma chain (281 aa).

This sequence belongs to the ATPase gamma chain family. F-type ATPases have 2 components, CF(1) - the catalytic core - and CF(0) - the membrane proton channel. CF(1) has five subunits: alpha(3), beta(3), gamma(1), delta(1), epsilon(1). CF(0) has three main subunits: a, b and c.

It localises to the cell membrane. Its function is as follows. Produces ATP from ADP in the presence of a proton gradient across the membrane. The gamma chain is believed to be important in regulating ATPase activity and the flow of protons through the CF(0) complex. The polypeptide is ATP synthase gamma chain (Clostridium pasteurianum).